We begin with the raw amino-acid sequence, 77 residues long: Protein AC43 (77 aa).

Plays a role in the production of occlusion bodies as well as expression of the polyhedrin gene. The protein is Protein AC43 of Autographa californica nuclear polyhedrosis virus (AcMNPV).